Here is a 182-residue protein sequence, read N- to C-terminus: Small ribosomal subunit protein uS5 (182 aa).

In terms of domain architecture, S5 DRBM spans 16–79 (FVDRLVHINR…ESAKRGMIYV (64 aa)).

The protein belongs to the universal ribosomal protein uS5 family. Part of the 30S ribosomal subunit. Contacts proteins S4 and S8.

Its function is as follows. With S4 and S12 plays an important role in translational accuracy. Functionally, located at the back of the 30S subunit body where it stabilizes the conformation of the head with respect to the body. This Bartonella tribocorum (strain CIP 105476 / IBS 506) protein is Small ribosomal subunit protein uS5.